The primary structure comprises 232 residues: Adenosylcobinamide-GDP ribazoletransferase (232 aa).

Helical transmembrane passes span 31 to 51 (LPSF…LGAL), 59 to 79 (VFFL…GFLD), 102 to 122 (VGPF…NLYL), 126 to 146 (PFYF…LMAF), 167 to 187 (LLIS…YIIS), and 209 to 229 (VTGD…LLIL).

It belongs to the CobS family. Mg(2+) serves as cofactor.

It is found in the cell inner membrane. It catalyses the reaction alpha-ribazole + adenosylcob(III)inamide-GDP = adenosylcob(III)alamin + GMP + H(+). The enzyme catalyses alpha-ribazole 5'-phosphate + adenosylcob(III)inamide-GDP = adenosylcob(III)alamin 5'-phosphate + GMP + H(+). The protein operates within cofactor biosynthesis; adenosylcobalamin biosynthesis; adenosylcobalamin from cob(II)yrinate a,c-diamide: step 7/7. Functionally, joins adenosylcobinamide-GDP and alpha-ribazole to generate adenosylcobalamin (Ado-cobalamin). Also synthesizes adenosylcobalamin 5'-phosphate from adenosylcobinamide-GDP and alpha-ribazole 5'-phosphate. This is Adenosylcobinamide-GDP ribazoletransferase from Thermosipho africanus (strain TCF52B).